Here is a 429-residue protein sequence, read N- to C-terminus: Enolase (429 aa).

Glutamine 163 is a binding site for (2R)-2-phosphoglycerate. The Proton donor role is filled by glutamate 205. Positions 242, 287, and 314 each coordinate Mg(2+). The (2R)-2-phosphoglycerate site is built by lysine 339, arginine 368, serine 369, and lysine 390. The Proton acceptor role is filled by lysine 339.

Belongs to the enolase family. Mg(2+) is required as a cofactor.

The protein resides in the cytoplasm. It localises to the secreted. The protein localises to the cell surface. It catalyses the reaction (2R)-2-phosphoglycerate = phosphoenolpyruvate + H2O. Its pathway is carbohydrate degradation; glycolysis; pyruvate from D-glyceraldehyde 3-phosphate: step 4/5. Catalyzes the reversible conversion of 2-phosphoglycerate (2-PG) into phosphoenolpyruvate (PEP). It is essential for the degradation of carbohydrates via glycolysis. This chain is Enolase, found in Magnetococcus marinus (strain ATCC BAA-1437 / JCM 17883 / MC-1).